Reading from the N-terminus, the 388-residue chain is Flap endonuclease 1 (388 aa).

An N-domain region spans residues 1 to 105 (MGIKNLTSLI…GELAKRYARR (105 aa)). Aspartate 34 lines the Mg(2+) pocket. Arginine 71 provides a ligand contact to DNA. Aspartate 87, glutamate 159, glutamate 161, aspartate 180, and aspartate 182 together coordinate Mg(2+). Positions 123 to 254 (DVQKFQKRTI…KKSFDMITKH (132 aa)) are I-domain. Position 159 (glutamate 159) interacts with DNA. DNA-binding residues include glycine 232 and aspartate 234. Position 234 (aspartate 234) interacts with Mg(2+). Positions 338-346 (VQTRIDTFF) are interaction with PCNA. The disordered stretch occupies residues 349–388 (IKRPRDEDAGSAKKKQKTVAKPGAAGSKKKPAAKKAAGKK). Over residues 375–388 (SKKKPAAKKAAGKK) the composition is skewed to basic residues.

The protein belongs to the XPG/RAD2 endonuclease family. FEN1 subfamily. In terms of assembly, interacts with PCNA. Three molecules of repG bind to one PCNA trimer with each molecule binding to one PCNA monomer. PCNA stimulates the nuclease activity without altering cleavage specificity. The cofactor is Mg(2+). Phosphorylated. Phosphorylation upon DNA damage induces relocalization to the nuclear plasma.

The protein localises to the nucleus. It is found in the nucleolus. It localises to the nucleoplasm. Its subcellular location is the mitochondrion. Structure-specific nuclease with 5'-flap endonuclease and 5'-3' exonuclease activities involved in DNA replication and repair. During DNA replication, cleaves the 5'-overhanging flap structure that is generated by displacement synthesis when DNA polymerase encounters the 5'-end of a downstream Okazaki fragment. It enters the flap from the 5'-end and then tracks to cleave the flap base, leaving a nick for ligation. Also involved in the long patch base excision repair (LP-BER) pathway, by cleaving within the apurinic/apyrimidinic (AP) site-terminated flap. Acts as a genome stabilization factor that prevents flaps from equilibrating into structures that lead to duplications and deletions. Also possesses 5'-3' exonuclease activity on nicked or gapped double-stranded DNA, and exhibits RNase H activity. Also involved in replication and repair of rDNA and in repairing mitochondrial DNA. The sequence is that of Flap endonuclease 1 from Heterostelium pallidum (strain ATCC 26659 / Pp 5 / PN500) (Cellular slime mold).